We begin with the raw amino-acid sequence, 275 residues long: AA9 family lytic polysaccharide monooxygenase D (275 aa).

A signal peptide spans 1–17 (MKLSLLAIAAIAPFVSA). Residues H18 and H101 each contribute to the Cu(2+) site. A disulfide bridge connects residues C67 and C189. H176 contacts O2. Y186 serves as a coordination point for Cu(2+). An N-linked (GlcNAc...) asparagine glycan is attached at N220.

It belongs to the polysaccharide monooxygenase AA9 family. It depends on Cu(2+) as a cofactor.

The protein resides in the secreted. The enzyme catalyses [(1-&gt;4)-beta-D-glucosyl]n+m + reduced acceptor + O2 = 4-dehydro-beta-D-glucosyl-[(1-&gt;4)-beta-D-glucosyl]n-1 + [(1-&gt;4)-beta-D-glucosyl]m + acceptor + H2O.. Functionally, lytic polysaccharide monooxygenase (LPMO) that depolymerizes crystalline and amorphous polysaccharides via the oxidation of scissile alpha- or beta-(1-4)-glycosidic bonds, yielding C1 or C4 oxidation products. Catalysis by LPMOs requires the reduction of the active-site copper from Cu(II) to Cu(I) by a reducing agent and H(2)O(2) or O(2) as a cosubstrate. This Aspergillus tamarii protein is AA9 family lytic polysaccharide monooxygenase D.